A 296-amino-acid chain; its full sequence is 4-hydroxybenzoate octaprenyltransferase (296 aa).

The next 8 membrane-spanning stretches (helical) occupy residues 28-48 (PIGIYLLLWPTLWALWIAGKG), 52-72 (LINIVIFVLGVVLTRAGGCVI), 102-122 (ALVFFAVLMGISFLLVLLTNA), 146-166 (YYPQVVLGAAFSWGMPMAFTA), 169-189 (GDLPATAWLLYIANLLWTVGY), 219-239 (VIILTLQGLSLVCLLLAGARF), 241-261 (LGGWFHLGLLAAAGCFAWEFW), and 275-295 (FLHNHWAGLAIFVGIVADYAF).

This sequence belongs to the UbiA prenyltransferase family. It depends on Mg(2+) as a cofactor.

The protein localises to the cell inner membrane. It carries out the reaction all-trans-octaprenyl diphosphate + 4-hydroxybenzoate = 4-hydroxy-3-(all-trans-octaprenyl)benzoate + diphosphate. It participates in cofactor biosynthesis; ubiquinone biosynthesis. Its function is as follows. Catalyzes the prenylation of para-hydroxybenzoate (PHB) with an all-trans polyprenyl group. Mediates the second step in the final reaction sequence of ubiquinone-8 (UQ-8) biosynthesis, which is the condensation of the polyisoprenoid side chain with PHB, generating the first membrane-bound Q intermediate 3-octaprenyl-4-hydroxybenzoate. This is 4-hydroxybenzoate octaprenyltransferase from Pseudomonas fluorescens (strain SBW25).